A 220-amino-acid polypeptide reads, in one-letter code: Guanylate kinase (220 aa).

The 180-residue stretch at 16–195 (GLMFVLSSPS…AFESVKAILR (180 aa)) folds into the Guanylate kinase-like domain. 23–30 (SPSGAGKT) is an ATP binding site.

It belongs to the guanylate kinase family.

It is found in the cytoplasm. The catalysed reaction is GMP + ATP = GDP + ADP. Functionally, essential for recycling GMP and indirectly, cGMP. The chain is Guanylate kinase from Rhodopseudomonas palustris (strain HaA2).